Reading from the N-terminus, the 475-residue chain is Bifunctional aspartate aminotransferase and glutamate/aspartate-prephenate aminotransferase (475 aa).

The transit peptide at 1–55 directs the protein to the chloroplast; sequence MASQSSVAVISSAAARGESFPDSKKPIGSVRFQQPLRLSFSYCKSGNMSSRICAM. Residues glycine 107, tryptophan 193, and asparagine 243 each contribute to the L-aspartate site. Lysine 306 carries the post-translational modification N6-(pyridoxal phosphate)lysine. Arginine 445 lines the L-aspartate pocket.

The protein belongs to the class-I pyridoxal-phosphate-dependent aminotransferase family. Homodimer. It depends on pyridoxal 5'-phosphate as a cofactor.

It is found in the plastid. Its subcellular location is the chloroplast. The catalysed reaction is L-aspartate + 2-oxoglutarate = oxaloacetate + L-glutamate. The enzyme catalyses L-arogenate + oxaloacetate = prephenate + L-aspartate. It catalyses the reaction L-arogenate + 2-oxoglutarate = prephenate + L-glutamate. The protein operates within amino-acid biosynthesis; L-phenylalanine biosynthesis; L-arogenate from prephenate (L-Asp route): step 1/1. It functions in the pathway amino-acid biosynthesis; L-phenylalanine biosynthesis; L-arogenate from prephenate (L-Glu route): step 1/1. Prokaryotic-type aspartate aminotransferase. Also has a prenate transaminase activity. Involved in the aromatic amino acids biosynthesis pathway via the arogenate route. Required for the transamination of prephenate into arogenate. Required for early development of the embryo. In Arabidopsis thaliana (Mouse-ear cress), this protein is Bifunctional aspartate aminotransferase and glutamate/aspartate-prephenate aminotransferase (PAT).